Consider the following 289-residue polypeptide: Poly-beta-1,6-N-acetyl-D-glucosamine N-deacetylase (289 aa).

The N-terminal stretch at 1-30 (MKPFKLIFISALMILIMTNATPISHLNAQA) is a signal peptide. The NodB homology domain maps to 113 to 289 (RSVWINFDDM…KEWDGFDEEK (177 aa)).

This sequence belongs to the polysaccharide deacetylase family.

It localises to the secreted. The protein localises to the cell wall. Catalyzes the N-deacetylation of poly-beta-1,6-N-acetyl-D-glucosamine (PNAG, also referred to as PIA), a biofilm adhesin polysaccharide. In fact, the IcaB deacetylase converts 15 to 20% of the GlcNAc residues of PNAG to glucosamine. N-deacetylation is crucial for attachment of the polysaccharide to the bacterial cell surface; it leads to the introduction of positive charges in the otherwise neutral PIA polymer, allowing electrostatic interactions. Deacetylation of the polymer is also essential for key virulence mechanisms of S.epidermidis, namely biofilm formation, colonization, and resistance to neutrophil phagocytosis and human antibacterial peptides. The sequence is that of Poly-beta-1,6-N-acetyl-D-glucosamine N-deacetylase (icaB) from Staphylococcus epidermidis (strain ATCC 35984 / DSM 28319 / BCRC 17069 / CCUG 31568 / BM 3577 / RP62A).